We begin with the raw amino-acid sequence, 547 residues long: Aspartate 1-decarboxylase (547 aa).

Lys338 is modified (N6-(pyridoxal phosphate)lysine).

It belongs to the group II decarboxylase family. The cofactor is pyridoxal 5'-phosphate.

It catalyses the reaction L-aspartate + H(+) = beta-alanine + CO2. The protein operates within cofactor biosynthesis; (R)-pantothenate biosynthesis; beta-alanine from L-aspartate: step 1/1. Its function is as follows. Catalyzes the pyridoxal-dependent decarboxylation of aspartate to produce beta-alanine. Has weak activity with glutamate. This chain is Aspartate 1-decarboxylase, found in Aliivibrio fischeri (strain ATCC 700601 / ES114) (Vibrio fischeri).